The following is a 154-amino-acid chain: Ribosome maturation factor RimP (154 aa).

Belongs to the RimP family.

The protein localises to the cytoplasm. Its function is as follows. Required for maturation of 30S ribosomal subunits. The protein is Ribosome maturation factor RimP of Cyanothece sp. (strain PCC 7425 / ATCC 29141).